Consider the following 1125-residue polypeptide: Kinase and exchange factor for Rac B (1125 aa).

Disordered regions lie at residues 50–175 (VTGG…ASIN), 247–287 (SVPG…GGKF), and 322–362 (KTRD…VNSD). Positions 59 to 91 (NNQQQQQNNNNNNNNNNNNNNNNNNNNNNNNNN) are enriched in low complexity. Positions 92–106 (SGEISSNNSTPSILF) are enriched in polar residues. Pro residues predominate over residues 113 to 124 (TAPPAPPQPTTP). The segment covering 137–161 (NINQQPIGGVNNNNNNNNKDSPSNK) has biased composition (low complexity). A DH domain is found at 380-571 (KRRQVSLQIL…KSTVDYVKEK (192 aa)). In terms of domain architecture, PH spans 601–822 (RYVREGMLTE…WIQAIHANII (222 aa)). 2 disordered regions span residues 693–729 (INNM…SNNN) and 761–791 (SNNN…YSNG). Residues 694-729 (NNMTNNDSKSKNNNNNNSNGNNNNNNINSNSNSNNN) are compositionally biased toward low complexity. Positions 848–1117 (IKLCEQIGSG…QLVQKLTKML (270 aa)) constitute a Protein kinase domain. ATP contacts are provided by residues 854–862 (IGSGGSGCT) and Lys-876. Catalysis depends on Asp-971, which acts as the Proton acceptor.

Belongs to the protein kinase superfamily. STE Ser/Thr protein kinase family. Requires Mg(2+) as cofactor.

The catalysed reaction is L-seryl-[protein] + ATP = O-phospho-L-seryl-[protein] + ADP + H(+). It carries out the reaction L-threonyl-[protein] + ATP = O-phospho-L-threonyl-[protein] + ADP + H(+). This chain is Kinase and exchange factor for Rac B, found in Dictyostelium discoideum (Social amoeba).